Here is a 658-residue protein sequence, read N- to C-terminus: Katanin p80 WD40 repeat-containing subunit B1 (658 aa).

Positions 1–284 (MATPVVTKTA…VADLAICNDQ (284 aa)) are interaction with dynein. The interval 1 to 300 (MATPVVTKTA…SQSNVSSYVV (300 aa)) is interaction with centrosomes. WD repeat units lie at residues 18 to 58 (AHAS…CIMS), 61 to 100 (GHTS…ILRT), 103 to 142 (GHKA…CVFR), 145 to 184 (GHSQ…MMSE), 187 to 226 (GHTG…VVSC), and 229 to 269 (GEPG…DVVL). The tract at residues 285–437 (LIGVAFSQSN…LPQLPVPNLE (153 aa)) is interaction with PAFAH1B1. The span at 311–329 (VTQDPVQANQPLTQQTPNP) shows a compositional bias: polar residues. 2 disordered regions span residues 311–419 (VTQD…EVSK) and 434–458 (PNLE…PDII). Over residues 352-374 (HNSESERRSPSSEDDRDERESRA) the composition is skewed to basic and acidic residues. Thr-395 is modified (phosphothreonine). The interval 436–658 (LEVPARPSVM…ELHLLMASLD (223 aa)) is interaction with KATNA1 and NDEL1.

The protein belongs to the WD repeat KATNB1 family. Interacts with KATNA1. This interaction enhances the microtubule binding and severing activity of KATNA1 and also targets this activity to the centrosome. This interaction is weakly competed by KATNBL1 which has a lower affinity for it. Interacts with ASPM; the katanin complex formation KATNA1:KATNB1 is required for the association of ASPM. Interacts with dynein, microtubules, NDEL1 and PAFAH1B1. Interacts with KATNAL1; this interaction is weakly competed by KATNBL1 which has a lower affinity for it. Interacts with CAMSAP2 and CAMSAP3; leading to regulate the length of CAMSAP-decorated microtubule stretches.

The protein resides in the cytoplasm. It localises to the cytoskeleton. Its subcellular location is the microtubule organizing center. It is found in the centrosome. The protein localises to the spindle pole. The protein resides in the spindle. Participates in a complex which severs microtubules in an ATP-dependent manner. May act to target the enzymatic subunit of this complex to sites of action such as the centrosome. Microtubule severing may promote rapid reorganization of cellular microtubule arrays and the release of microtubules from the centrosome following nucleation. Microtubule release from the mitotic spindle poles may allow depolymerization of the microtubule end proximal to the spindle pole, leading to poleward microtubule flux and poleward motion of chromosome. The function in regulating microtubule dynamics at spindle poles seems to depend on the association of the katanin KATNA1:KATNB1 complex with ASPM which recruits it to microtubules. Reversely KATNA1:KATNB1 can enhance ASPM blocking activity on microtubule minus-end growth. Microtubule release within the cell body of neurons may be required for their transport into neuronal processes by microtubule-dependent motor proteins. This transport is required for axonal growth. This chain is Katanin p80 WD40 repeat-containing subunit B1 (Katnb1), found in Mus musculus (Mouse).